An 88-amino-acid polypeptide reads, in one-letter code: Small ribosomal subunit protein uS15 (88 aa).

This sequence belongs to the universal ribosomal protein uS15 family. In terms of assembly, part of the 30S ribosomal subunit. Forms a bridge to the 50S subunit in the 70S ribosome, contacting the 23S rRNA.

One of the primary rRNA binding proteins, it binds directly to 16S rRNA where it helps nucleate assembly of the platform of the 30S subunit by binding and bridging several RNA helices of the 16S rRNA. In terms of biological role, forms an intersubunit bridge (bridge B4) with the 23S rRNA of the 50S subunit in the ribosome. The chain is Small ribosomal subunit protein uS15 from Francisella tularensis subsp. holarctica (strain LVS).